The following is a 225-amino-acid chain: Ribonuclease 3 (225 aa).

In terms of domain architecture, RNase III spans 5–127 (VTELYKTIDY…IIGAVFLDSD (123 aa)). A Mg(2+)-binding site is contributed by Glu-40. Residue Asp-44 is part of the active site. 2 residues coordinate Mg(2+): Asp-113 and Glu-116. Glu-116 is an active-site residue. The DRBM domain occupies 154-223 (DPKTLLQEHL…AEKALKILKN (70 aa)).

The protein belongs to the ribonuclease III family. As to quaternary structure, homodimer. It depends on Mg(2+) as a cofactor.

The protein resides in the cytoplasm. It catalyses the reaction Endonucleolytic cleavage to 5'-phosphomonoester.. In terms of biological role, digests double-stranded RNA. Involved in the processing of primary rRNA transcript to yield the immediate precursors to the large and small rRNAs (23S and 16S). Processes some mRNAs, and tRNAs when they are encoded in the rRNA operon. Processes pre-crRNA and tracrRNA of type II CRISPR loci if present in the organism. This is Ribonuclease 3 from Pseudoalteromonas translucida (strain TAC 125).